A 238-amino-acid polypeptide reads, in one-letter code: 3,4-dihydroxy-2-butanone 4-phosphate synthase (238 aa).

Residues 26-27 (RE), Asp-31, 166-170 (RVGQT), and Glu-190 each bind D-ribulose 5-phosphate. A Mg(2+)-binding site is contributed by Glu-27.

The protein belongs to the DHBP synthase family. Homodimer. Mg(2+) serves as cofactor. Requires Mn(2+) as cofactor.

The enzyme catalyses D-ribulose 5-phosphate = (2S)-2-hydroxy-3-oxobutyl phosphate + formate + H(+). It participates in cofactor biosynthesis; riboflavin biosynthesis; 2-hydroxy-3-oxobutyl phosphate from D-ribulose 5-phosphate: step 1/1. Its function is as follows. Catalyzes the conversion of D-ribulose 5-phosphate to formate and 3,4-dihydroxy-2-butanone 4-phosphate. This is 3,4-dihydroxy-2-butanone 4-phosphate synthase from Archaeoglobus fulgidus (strain ATCC 49558 / DSM 4304 / JCM 9628 / NBRC 100126 / VC-16).